Reading from the N-terminus, the 379-residue chain is UDP-4-amino-4-deoxy-L-arabinose--oxoglutarate aminotransferase (379 aa).

K182 is modified (N6-(pyridoxal phosphate)lysine).

It belongs to the DegT/DnrJ/EryC1 family. ArnB subfamily. In terms of assembly, homodimer. The cofactor is pyridoxal 5'-phosphate.

The enzyme catalyses UDP-4-amino-4-deoxy-beta-L-arabinose + 2-oxoglutarate = UDP-beta-L-threo-pentopyranos-4-ulose + L-glutamate. The protein operates within nucleotide-sugar biosynthesis; UDP-4-deoxy-4-formamido-beta-L-arabinose biosynthesis; UDP-4-deoxy-4-formamido-beta-L-arabinose from UDP-alpha-D-glucuronate: step 2/3. It participates in bacterial outer membrane biogenesis; lipopolysaccharide biosynthesis. Catalyzes the conversion of UDP-4-keto-arabinose (UDP-Ara4O) to UDP-4-amino-4-deoxy-L-arabinose (UDP-L-Ara4N). The modified arabinose is attached to lipid A and is required for resistance to polymyxin and cationic antimicrobial peptides. This Escherichia coli O7:K1 (strain IAI39 / ExPEC) protein is UDP-4-amino-4-deoxy-L-arabinose--oxoglutarate aminotransferase.